The sequence spans 202 residues: uncharacterized protein (202 aa).

A disordered region spans residues Val178–Asn202.

This is an uncharacterized protein from Homo sapiens (Human).